The primary structure comprises 452 residues: 1,4-beta-D-glucan cellobiohydrolase A (452 aa).

An N-terminal signal peptide occupies residues M1 to A17. An N-linked (GlcNAc...) asparagine glycan is attached at N62. The active-site Nucleophile is E227. E232 functions as the Proton donor in the catalytic mechanism. 4 N-linked (GlcNAc...) asparagine glycosylation sites follow: N285, N335, N402, and N445.

This sequence belongs to the glycosyl hydrolase 7 (cellulase C) family.

It is found in the secreted. The catalysed reaction is Hydrolysis of (1-&gt;4)-beta-D-glucosidic linkages in cellulose and cellotetraose, releasing cellobiose from the non-reducing ends of the chains.. In terms of biological role, the biological conversion of cellulose to glucose generally requires three types of hydrolytic enzymes: (1) Endoglucanases which cut internal beta-1,4-glucosidic bonds; (2) Exocellobiohydrolases that cut the disaccharide cellobiose from the non-reducing end of the cellulose polymer chain; (3) Beta-1,4-glucosidases which hydrolyze the cellobiose and other short cello-oligosaccharides to glucose. The polypeptide is 1,4-beta-D-glucan cellobiohydrolase A (cbhA) (Aspergillus niger).